The primary structure comprises 27 residues: Conotoxin flf14b (27 aa).

2 disulfides stabilise this stretch: Cys-6–Cys-26 and Cys-10–Cys-22.

In terms of tissue distribution, expressed by the venom duct.

Its subcellular location is the secreted. The polypeptide is Conotoxin flf14b (Conus anabathrum floridanus (Florida cone)).